A 457-amino-acid polypeptide reads, in one-letter code: Dihydrolipoyl dehydrogenase (457 aa).

FAD contacts are provided by residues 32 to 40, lysine 49, and alanine 113; that span reads EKQYFGGVC. A disulfide bridge links cysteine 40 with cysteine 45. Residues 178-182, valine 235, and 262-265 each bind NAD(+); these read GGGVI and SIGR. Residues aspartate 303 and alanine 311 each coordinate FAD. Histidine 437 functions as the Proton acceptor in the catalytic mechanism.

It belongs to the class-I pyridine nucleotide-disulfide oxidoreductase family. In terms of assembly, homodimer. The cofactor is FAD.

The protein localises to the cytoplasm. It catalyses the reaction N(6)-[(R)-dihydrolipoyl]-L-lysyl-[protein] + NAD(+) = N(6)-[(R)-lipoyl]-L-lysyl-[protein] + NADH + H(+). Functionally, lipoamide dehydrogenase is a component of the alpha-ketoacid dehydrogenase complexes. The chain is Dihydrolipoyl dehydrogenase (pdhD) from Mycoplasma genitalium (strain ATCC 33530 / DSM 19775 / NCTC 10195 / G37) (Mycoplasmoides genitalium).